The following is a 105-amino-acid chain: Small ribosomal subunit protein eS24 (105 aa).

Positions 86–105 (LERNKIEADEEADEEAAEEA) are disordered. Over residues 93–105 (ADEEADEEAAEEA) the composition is skewed to acidic residues.

It belongs to the eukaryotic ribosomal protein eS24 family.

The polypeptide is Small ribosomal subunit protein eS24 (Natronomonas pharaonis (strain ATCC 35678 / DSM 2160 / CIP 103997 / JCM 8858 / NBRC 14720 / NCIMB 2260 / Gabara) (Halobacterium pharaonis)).